A 316-amino-acid polypeptide reads, in one-letter code: Acetyl-coenzyme A carboxylase carboxyl transferase subunit alpha (316 aa).

The CoA carboxyltransferase C-terminal domain occupies N24–E291.

It belongs to the AccA family. As to quaternary structure, acetyl-CoA carboxylase is a heterohexamer composed of biotin carboxyl carrier protein (AccB), biotin carboxylase (AccC) and two subunits each of ACCase subunit alpha (AccA) and ACCase subunit beta (AccD).

The protein resides in the cytoplasm. It carries out the reaction N(6)-carboxybiotinyl-L-lysyl-[protein] + acetyl-CoA = N(6)-biotinyl-L-lysyl-[protein] + malonyl-CoA. It functions in the pathway lipid metabolism; malonyl-CoA biosynthesis; malonyl-CoA from acetyl-CoA: step 1/1. Component of the acetyl coenzyme A carboxylase (ACC) complex. First, biotin carboxylase catalyzes the carboxylation of biotin on its carrier protein (BCCP) and then the CO(2) group is transferred by the carboxyltransferase to acetyl-CoA to form malonyl-CoA. This is Acetyl-coenzyme A carboxylase carboxyl transferase subunit alpha from Ruthia magnifica subsp. Calyptogena magnifica.